The primary structure comprises 70 residues: Putative RNA-binding protein YbcJ (70 aa).

In terms of domain architecture, S4 RNA-binding spans 12–68 (VELCDLLKLEGWSESGAQAKIAIAEGQVKVDGAVETRKRCKIVAGQTVSFAGHSVQV).

In terms of assembly, in pull-down experiments interacts with CedA.

Its function is as follows. Its structure and the presence of conserved basic residues indicates that it probably binds RNA. This chain is Putative RNA-binding protein YbcJ (ybcJ), found in Escherichia coli (strain K12).